The following is a 449-amino-acid chain: Probable glycine dehydrogenase (decarboxylating) subunit 1 (449 aa).

It belongs to the GcvP family. N-terminal subunit subfamily. As to quaternary structure, the glycine cleavage system is composed of four proteins: P, T, L and H. In this organism, the P 'protein' is a heterodimer of two subunits.

It catalyses the reaction N(6)-[(R)-lipoyl]-L-lysyl-[glycine-cleavage complex H protein] + glycine + H(+) = N(6)-[(R)-S(8)-aminomethyldihydrolipoyl]-L-lysyl-[glycine-cleavage complex H protein] + CO2. The glycine cleavage system catalyzes the degradation of glycine. The P protein binds the alpha-amino group of glycine through its pyridoxal phosphate cofactor; CO(2) is released and the remaining methylamine moiety is then transferred to the lipoamide cofactor of the H protein. This Rhodospirillum centenum (strain ATCC 51521 / SW) protein is Probable glycine dehydrogenase (decarboxylating) subunit 1.